An 889-amino-acid chain; its full sequence is Phosphatidylinositol 3-kinase VPS34 (889 aa).

The C2 PI3K-type domain occupies 34-184; it reads ASEKLIDPQL…EWIDELVLKK (151 aa). Residues 298 to 540 form the PIK helical domain; sequence SDKHVKPDAK…ESFLSRLNSN (243 aa). The region spanning 607–873 is the PI3K/PI4K catalytic domain; that stretch reads MIDQCNVFKS…LINDSVNALL (267 aa). The interval 613-619 is G-loop; the sequence is VFKSSLS. Positions 742–750 are catalytic loop; the sequence is GVGDRHLDN. Positions 761–782 are activation loop; it reads HADFGYILGQDPKPFPPLMKLP.

Belongs to the PI3/PI4-kinase family. Type III PI4K subfamily. As to quaternary structure, component of the autophagy-specific VPS34 PI3-kinase complex I composed of VPS15, VPS30, VPS34, ATG14 and ATG38; and of the VPS34 PI3-kinase complex II composed of VPS15, VPS30, VPS34 and VPS38. Post-translationally, autophosphorylated.

It is found in the golgi apparatus. Its subcellular location is the trans-Golgi network membrane. The protein resides in the endosome membrane. The catalysed reaction is a 1,2-diacyl-sn-glycero-3-phospho-(1D-myo-inositol) + ATP = a 1,2-diacyl-sn-glycero-3-phospho-(1D-myo-inositol-3-phosphate) + ADP + H(+). Multifunctional phosphatidylinositol 3-kinase that plays a role in signaling in modulation of host immune response, intracellular survival and virulence. Catalytic subunit of the autophagy-specific VPS34 PI3-kinase complex I essential to recruit the ATG8-phosphatidylinositol conjugate and the ATG12-ATG5 conjugate to the pre-autophagosomal structure. Also involved in endosome-to-Golgi retrograde transport as part of the VPS34 PI3-kinase complex II. This second complex is required for the endosome-to-Golgi retrieval of PEP1 and KEX2, and the recruitment of VPS5 and VPS7, two components of the retromer complex, to endosomal membranes (probably through the synthesis of a specific pool of phosphatidylinositol 3-phosphate recruiting the retromer to the endosomes). Finally, it might also be involved in ethanol tolerance and cell wall integrity. The sequence is that of Phosphatidylinositol 3-kinase VPS34 from Candida glabrata (strain ATCC 2001 / BCRC 20586 / JCM 3761 / NBRC 0622 / NRRL Y-65 / CBS 138) (Yeast).